The following is a 923-amino-acid chain: Neuropilin-1 (923 aa).

The N-terminal stretch at 1 to 21 is a signal peptide; sequence MERGLPLLCATLALALALAGA. Topologically, residues 22–856 are extracellular; that stretch reads FRSDKCGGTI…PGNVLKTLDP (835 aa). Cystine bridges form between Cys27-Cys54, Cys82-Cys104, and Cys147-Cys173. CUB domains are found at residues 27–141 and 147–265; these read CGGT…YEIF and CSQN…YSVL. Asn150 carries an N-linked (GlcNAc...) asparagine glycan. Ca(2+) is bound by residues Glu195, Asp209, and Asp250. Cys206 and Cys228 are disulfide-bonded. Asn261, Asn300, and Asn522 each carry an N-linked (GlcNAc...) asparagine glycan. 2 disulfide bridges follow: Cys275–Cys424 and Cys431–Cys583. F5/8 type C domains lie at 275–424 and 431–583; these read CMEA…VYGC and CSGM…LLGC. Residue Ser612 is glycosylated (O-linked (Xyl...) (chondroitin sulfate) serine; alternate). Ser612 carries an O-linked (Xyl...) (heparan sulfate) serine; alternate glycan. Positions 645–811 constitute an MAM domain; it reads TYGFNCEFGW…NHISQEDCAK (167 aa). Positions 820–845 are disordered; that stretch reads TEIKIDETGSTPGYEGEGEGDKNISR. O-linked (Xyl...) (chondroitin sulfate) serine glycosylation occurs at Ser829. Residue Asn842 is glycosylated (N-linked (GlcNAc...) asparagine). A helical transmembrane segment spans residues 857–879; it reads ILITIIAMSALGVLLGAVCGVVL. Residues 880–923 are Cytoplasmic-facing; sequence YCACWHNGMSERNLSALENYNFELVDGVKLKKDKLNPQSNYSEA. Ser894 bears the Phosphoserine mark.

This sequence belongs to the neuropilin family. As to quaternary structure, homodimer, and heterodimer with NRP2. Binds PLXNB1. Interacts with FER. Interacts with VEGFA. Interacts with ABCB8/MITOSUR in mitochondria. In terms of tissue distribution, nervous system.

Its subcellular location is the mitochondrion membrane. It is found in the cell membrane. The protein localises to the cytoplasm. In terms of biological role, receptor involved in the development of the cardiovascular system, in angiogenesis, in the formation of certain neuronal circuits and in organogenesis outside the nervous system. Mediates the chemorepulsant activity of semaphorins. Recognizes a C-end rule (CendR) motif R/KXXR/K on its ligands which causes cellular internalization and vascular leakage. Binds to semaphorin 3A (SEMA3A), the PLGF-2 isoform of PGF, the VEGF165 isoform of VEGFA and VEGFB. Coexpression with KDR results in increased VEGF165 binding to KDR as well as increased chemotaxis. Regulates VEGF-induced angiogenesis. Binding to VEGFA initiates a signaling pathway needed for motor neuron axon guidance and cell body migration, including for the caudal migration of facial motor neurons from rhombomere 4 to rhombomere 6 during embryonic development. Regulates mitochondrial iron transport via interaction with ABCB8/MITOSUR. In Mus musculus (Mouse), this protein is Neuropilin-1.